Reading from the N-terminus, the 341-residue chain is Dihydroorotate dehydrogenase (quinone) (341 aa).

FMN is bound by residues alanine 59–lysine 63 and threonine 83. Lysine 63 serves as a coordination point for substrate. Asparagine 108–phenylalanine 112 is a substrate binding site. Positions 136 and 169 each coordinate FMN. Residue asparagine 169 coordinates substrate. The Nucleophile role is filled by serine 172. Asparagine 174 contributes to the substrate binding site. The FMN site is built by lysine 214 and threonine 242. Position 243–244 (asparagine 243–threonine 244) interacts with substrate. Residues glycine 265, glycine 294, and tyrosine 315 to serine 316 each bind FMN.

This sequence belongs to the dihydroorotate dehydrogenase family. Type 2 subfamily. Monomer. FMN is required as a cofactor.

It localises to the cell membrane. The enzyme catalyses (S)-dihydroorotate + a quinone = orotate + a quinol. Its pathway is pyrimidine metabolism; UMP biosynthesis via de novo pathway; orotate from (S)-dihydroorotate (quinone route): step 1/1. Its function is as follows. Catalyzes the conversion of dihydroorotate to orotate with quinone as electron acceptor. This chain is Dihydroorotate dehydrogenase (quinone), found in Neisseria meningitidis serogroup C (strain 053442).